The chain runs to 228 residues: Deoxyguanosine kinase (228 aa).

Position 8–16 (8–16) interacts with ATP; the sequence is GPIGAGKSS. Substrate-binding residues include E32, Y44, and Q55. D78 (proton acceptor) is an active-site residue. Substrate-binding residues include R79, D84, and E149.

Belongs to the DCK/DGK family. In terms of assembly, heterodimer of a deoxyadenosine (DAK) and a deoxyguanosine kinase (DGK).

The catalysed reaction is 2'-deoxyguanosine + ATP = dGMP + ADP + H(+). Its function is as follows. DGK/DAK plays an essential role in generating the deoxyribonucleotide precursors, dGTP and dATP, for DNA metabolism. In Lactobacillus acidophilus (strain ATCC 700396 / NCK56 / N2 / NCFM), this protein is Deoxyguanosine kinase.